Consider the following 337-residue polypeptide: N-acetyl-gamma-glutamyl-phosphate reductase (337 aa).

Residue C149 is part of the active site.

Belongs to the NAGSA dehydrogenase family. Type 1 subfamily.

The protein localises to the cytoplasm. It carries out the reaction N-acetyl-L-glutamate 5-semialdehyde + phosphate + NADP(+) = N-acetyl-L-glutamyl 5-phosphate + NADPH + H(+). It functions in the pathway amino-acid biosynthesis; L-arginine biosynthesis; N(2)-acetyl-L-ornithine from L-glutamate: step 3/4. Functionally, catalyzes the NADPH-dependent reduction of N-acetyl-5-glutamyl phosphate to yield N-acetyl-L-glutamate 5-semialdehyde. The chain is N-acetyl-gamma-glutamyl-phosphate reductase from Wolinella succinogenes (strain ATCC 29543 / DSM 1740 / CCUG 13145 / JCM 31913 / LMG 7466 / NCTC 11488 / FDC 602W) (Vibrio succinogenes).